Here is a 338-residue protein sequence, read N- to C-terminus: Ribosomal RNA small subunit methyltransferase C (338 aa).

It belongs to the methyltransferase superfamily. RsmC family. As to quaternary structure, monomer.

It localises to the cytoplasm. The enzyme catalyses guanosine(1207) in 16S rRNA + S-adenosyl-L-methionine = N(2)-methylguanosine(1207) in 16S rRNA + S-adenosyl-L-homocysteine + H(+). Its function is as follows. Specifically methylates the guanine in position 1207 of 16S rRNA in the 30S particle. The polypeptide is Ribosomal RNA small subunit methyltransferase C (Buchnera aphidicola subsp. Acyrthosiphon pisum (strain APS) (Acyrthosiphon pisum symbiotic bacterium)).